We begin with the raw amino-acid sequence, 468 residues long: Effector protein hopD2 (468 aa).

Residues 1–20 (MNPLQPIQHSITNSQMSGGQ) show a composition bias toward polar residues. Positions 1-35 (MNPLQPIQHSITNSQMSGGQQLEAEGSQAHNSYSH) are disordered. The Tyrosine-protein phosphatase domain maps to 143 to 468 (DASSPPSAND…TQWRAKIALE (326 aa)). The active-site Phosphocysteine intermediate is Cys378.

In terms of assembly, interacts with EFR and FLS2 (via the kinase and cytoplasmic domains).

The protein resides in the secreted. It carries out the reaction O-phospho-L-tyrosyl-[protein] + H2O = L-tyrosyl-[protein] + phosphate. Inhibited by sodium orthovanadate. Its function is as follows. Effector showing tyrosine-phosphatase activity required for host defense suppression. Functions inside plant cells causing suppression of HR (hypersensitive response), PR1 gene expression and oxidative burst probably by interfering with a MAPK (mitogen-activated protein kinase) pathway. MAPK cascades are known to activate defense-related transcription factors. Inhibits plant pattern-recognition receptors (PRRs) activation. The protein is Effector protein hopD2 (hopD2) of Pseudomonas syringae pv. tomato (strain ATCC BAA-871 / DC3000).